A 443-amino-acid polypeptide reads, in one-letter code: Histidinol dehydrogenase (443 aa).

The NAD(+) site is built by tyrosine 133, glutamine 191, and asparagine 214. Residues serine 240, glutamine 262, and histidine 265 each coordinate substrate. Zn(2+) is bound by residues glutamine 262 and histidine 265. Catalysis depends on proton acceptor residues glutamate 329 and histidine 330. Positions 330, 363, 417, and 422 each coordinate substrate. Residue aspartate 363 participates in Zn(2+) binding. Position 422 (histidine 422) interacts with Zn(2+).

This sequence belongs to the histidinol dehydrogenase family. In terms of assembly, homodimer. It depends on Zn(2+) as a cofactor.

The enzyme catalyses L-histidinol + 2 NAD(+) + H2O = L-histidine + 2 NADH + 3 H(+). Its pathway is amino-acid biosynthesis; L-histidine biosynthesis; L-histidine from 5-phospho-alpha-D-ribose 1-diphosphate: step 9/9. Functionally, catalyzes the sequential NAD-dependent oxidations of L-histidinol to L-histidinaldehyde and then to L-histidine. The chain is Histidinol dehydrogenase from Yersinia pestis.